Consider the following 493-residue polypeptide: Glutamate--tRNA ligase (493 aa).

The 'HIGH' region signature appears at 10 to 20; it reads PSPTGTPHVGL. Positions 254–258 match the 'KMSKS' region motif; the sequence is KLSKR. ATP is bound at residue K257.

Belongs to the class-I aminoacyl-tRNA synthetase family. Glutamate--tRNA ligase type 1 subfamily. In terms of assembly, monomer.

Its subcellular location is the cytoplasm. The catalysed reaction is tRNA(Glu) + L-glutamate + ATP = L-glutamyl-tRNA(Glu) + AMP + diphosphate. Its function is as follows. Catalyzes the attachment of glutamate to tRNA(Glu) in a two-step reaction: glutamate is first activated by ATP to form Glu-AMP and then transferred to the acceptor end of tRNA(Glu). This chain is Glutamate--tRNA ligase, found in Corynebacterium efficiens (strain DSM 44549 / YS-314 / AJ 12310 / JCM 11189 / NBRC 100395).